The primary structure comprises 355 residues: Phosphoribosylformylglycinamidine cyclo-ligase (355 aa).

It belongs to the AIR synthase family.

The protein localises to the cytoplasm. It carries out the reaction 2-formamido-N(1)-(5-O-phospho-beta-D-ribosyl)acetamidine + ATP = 5-amino-1-(5-phospho-beta-D-ribosyl)imidazole + ADP + phosphate + H(+). Its pathway is purine metabolism; IMP biosynthesis via de novo pathway; 5-amino-1-(5-phospho-D-ribosyl)imidazole from N(2)-formyl-N(1)-(5-phospho-D-ribosyl)glycinamide: step 2/2. The sequence is that of Phosphoribosylformylglycinamidine cyclo-ligase from Paraburkholderia phytofirmans (strain DSM 17436 / LMG 22146 / PsJN) (Burkholderia phytofirmans).